A 542-amino-acid chain; its full sequence is Propane 2-monooxygenase, hydroxylase component large subunit (542 aa).

E97, E127, H130, E192, E226, and H229 together coordinate Fe cation.

It belongs to the TmoA/XamoA family. As to quaternary structure, the propane 2-monooxygenase multicomponent enzyme system is composed of an electron transfer component and a monooxygenase component interacting with the effector protein MimD. The electron transfer component is composed of a reductase (MimB), and the monooxygenase component is formed by a large subunit (MimA) and a small subunit (MimC). Requires the presence of the chaperonin-like protein MimG to ensure a productive folding, resulting of a soluble MimA, which leads to the active form of MimABCD. Fe(2+) serves as cofactor.

It carries out the reaction propane + NADH + O2 + H(+) = propan-2-ol + NAD(+) + H2O. It catalyses the reaction acetone + NADH + O2 + H(+) = hydroxyacetone + NAD(+) + H2O. The enzyme catalyses butan-2-one + NADH + O2 + H(+) = 1-hydroxy-2-butanone + NAD(+) + H2O. The catalysed reaction is phenol + NADH + O2 + H(+) = hydroquinone + NAD(+) + H2O. Its function is as follows. Component of the propane 2-monooxygenase multicomponent enzyme system which is involved in the degradation of propane via the O2-dependent hydroxylation of propane. Also involved in the degradation of acetone via the O2-dependent hydroxylation of acetone. Also able to catalyze the oxidation of phenol, methylethylketone (2-butanone), 1-propanol and 2-propanol. The sequence is that of Propane 2-monooxygenase, hydroxylase component large subunit from Mycolicibacterium smegmatis (strain ATCC 700084 / mc(2)155) (Mycobacterium smegmatis).